The primary structure comprises 218 residues: Oxygen regulatory protein NreC (218 aa).

In terms of domain architecture, Response regulatory spans lysine 2–tyrosine 119. At aspartate 53 the chain carries 4-aspartylphosphate. In terms of domain architecture, HTH luxR-type spans serine 149 to lysine 214. The H-T-H motif DNA-binding region spans asparagine 173–threonine 192.

Phosphorylated by NreB.

It localises to the cytoplasm. Functionally, member of the two-component regulatory system NreB/NreC involved in the control of dissimilatory nitrate/nitrite reduction in response to oxygen. Phosphorylated NreC binds to a GC-rich palindromic sequence at the promoters of the nitrate (narGHJI) and nitrite (nir) reductase operons, as well as the putative nitrate transporter gene narT, and activates their expression. The sequence is that of Oxygen regulatory protein NreC (nreC) from Staphylococcus epidermidis (strain ATCC 12228 / FDA PCI 1200).